Reading from the N-terminus, the 318-residue chain is Ferrochelatase (318 aa).

Fe cation-binding residues include His186 and Glu264.

It belongs to the ferrochelatase family.

Its subcellular location is the cytoplasm. The catalysed reaction is heme b + 2 H(+) = protoporphyrin IX + Fe(2+). It functions in the pathway porphyrin-containing compound metabolism; protoheme biosynthesis; protoheme from protoporphyrin-IX: step 1/1. Its function is as follows. Catalyzes the ferrous insertion into protoporphyrin IX. The chain is Ferrochelatase from Chlamydia abortus (strain DSM 27085 / S26/3) (Chlamydophila abortus).